We begin with the raw amino-acid sequence, 25 residues long: Metallothionein (25 aa).

Residues C3, C5, C11, C13, C18, C20, and C23 each coordinate Cu(+).

The protein belongs to the metallothionein superfamily. Type 8 family.

Functionally, the metallothioneins are involved in the cellular sequestration of toxic metal ions. Binds six copper (cuprous) ions. This Agaricus bisporus (White button mushroom) protein is Metallothionein.